The chain runs to 817 residues: MGQGSGDDGVPPAPFSSAAAAAHSPPHSPLSVGVSSASSATSSSSTPPSSTSPAGVSASGARNVETDWKQSGDENLAELCIFHVPDKSVSLPNPKRAECTLPMNLILKSSSKNRKKSSIWSSDHIPRGVRFGPLVGEIRLVDVDTALVCPAEASMAGGGPAQEDVPFDEAPEEWKIYSPSGGRLNKTICVKDDARSNWMKYVAAAEEEDFQNLVAAQIGNDIYFYTVKKIEANTELSFWFSRDYARKLNYSTRPYVRVRRPATQLIPSAPPASASTAIASLAETIVAIDYSVKKLIESPIDTLSTDASSASDEEMIDVEEQESCTRPVAEVTRPNVIQNPVVRPVATKVNNFPGIPVRLGNFYASPLVDFKEFMRKSLQLKLVDTSMFVSPVAQTTAAITATGGRSGQPIDVQPVLAATAGAHFGNYAAIYGSQDFQHELSKPLYTSASPAFGGGGGMGGGFGMGGSAHTSSFHQLPFVNHSSSSHNDSSFNGVPNYVQQQENGKTRYACKDCNKTFGQLSNLKVHVRTHTGERPFKCEICTKEFTQLAHLQKHHLVHTGERPHRCDICDKRFSSTSNLKTHLRLHNGQKPYTCDVCDAKFTQYVHLRLHKRLHANERPYSCGTCGKKYISPSGLRTHWKTTTCKEEDMKDSMRDDLMDIKGEIDEGSMSGSGYGNLGIFENTLNSELKRPLMPIETIYSKYNLPNASLLGQGPSGMQEQQAPPPTSQQQQHMMYGNTMGHMGQGSHLQGPPPPPQHFQMDHSGMQNGGGIPHQHQLIQGGPSSGSGQQQHPQHNGIHRLPDLKNPLLPSLGLPHYP.

The tract at residues Met1–Arg62 is disordered. The span at Phe15–Ala61 shows a compositional bias: low complexity. The 139-residue stretch at Met103–Ser241 folds into the SET domain. 4 consecutive C2H2-type zinc fingers follow at residues Tyr508–His530, Phe536–His558, His564–His586, and Tyr592–His614. A C2H2-type 5; degenerate zinc finger spans residues Tyr620–Thr642. The tract at residues Leu709–Pro817 is disordered. The segment covering Gln779–His794 has biased composition (low complexity).

In terms of assembly, interacts with dre-1; the interaction targets blmp-1 for proteasomal degradation. Interacts with ldb-1 and ham-3. Ubiquitinated by the SCF(dre-1) complex, leading to its degradation by the proteasome. Expressed in hypodermal, vulval, intestinal and distal tip cells.

Its subcellular location is the nucleus. It localises to the cytoplasm. Transcription factor which binds to enhancer elements in the promoter region of genes. Regulates the expression of the transcription factor bed-3 to control vulval development. Promotes terminal differentiation in the hypodermis and is involved in regulation of gonadal outgrowth and entry into the dauer stage. Regulates the timing of dorsalward migration of the distal tip cells of the hermaphrodite gonad by inhibiting precocious unc-5 and lin-29 expression which in turn prevents early dorsalward turning. Plays a role in male tail tip morphogenesis. This chain is B lymphocyte-induced maturation protein 1 homolog, found in Caenorhabditis elegans.